Here is a 370-residue protein sequence, read N- to C-terminus: MPTETLQTGSMVKPVSPAGTFTSAVPLRILNKGPDYFRRQAEPNPKRLSAVERLEADKAKYVKSQEVINAKQEPVKPAVLAKPPVCPAAKRALGSPTLKVFGNHAKTESGVQRENLKLEILKNIINSSEGSSSGSGHKHSSRNWPPHRSEATDLHRHSFAESLKVYPTQGRSSPQEGGSHVGRRLLEQSAESFLHVSHSSSDIRKVTSVKPLKAIPCSSSAPPLPPKPKIAAIASMKSPEADPVEPACGVSRRPSLQRSKSDLSDRYFRVDADVERFFNYCGLDPEELENLGMENFARANSDIISLNFRSASMISSDCEQSQDSNSDLRNDDSANDRVPYGISAIERNARIIKWLYSIKQARESQKVSHV.

Disordered stretches follow at residues 127–151 (SSEGSSSGSGHKHSSRNWPPHRSEA) and 237–256 (KSPEADPVEPACGVSRRPSL). 2 positions are modified to phosphoserine: Ser-238 and Ser-301. The tract at residues 317–337 (DCEQSQDSNSDLRNDDSANDR) is disordered. Basic and acidic residues predominate over residues 326–335 (SDLRNDDSAN).

Belongs to the FAM110 family.

The protein resides in the cytoplasm. Its subcellular location is the cytoskeleton. It localises to the microtubule organizing center. It is found in the centrosome. The protein is Protein FAM110B (FAM110B) of Pongo abelii (Sumatran orangutan).